The sequence spans 143 residues: Nucleoside diphosphate kinase (143 aa).

ATP contacts are provided by Lys11, Phe59, Arg87, Thr93, Arg104, and Asn114. The Pros-phosphohistidine intermediate role is filled by His117.

It belongs to the NDK family. Homotetramer. Requires Mg(2+) as cofactor.

Its subcellular location is the cytoplasm. It carries out the reaction a 2'-deoxyribonucleoside 5'-diphosphate + ATP = a 2'-deoxyribonucleoside 5'-triphosphate + ADP. It catalyses the reaction a ribonucleoside 5'-diphosphate + ATP = a ribonucleoside 5'-triphosphate + ADP. Its function is as follows. Major role in the synthesis of nucleoside triphosphates other than ATP. The ATP gamma phosphate is transferred to the NDP beta phosphate via a ping-pong mechanism, using a phosphorylated active-site intermediate. This is Nucleoside diphosphate kinase from Shewanella pealeana (strain ATCC 700345 / ANG-SQ1).